The sequence spans 148 residues: Deoxyuridine 5'-triphosphate nucleotidohydrolase (148 aa).

Substrate-binding positions include 65-67 (RSG), asparagine 78, 82-84 (TID), and lysine 92.

Belongs to the dUTPase family. Mg(2+) serves as cofactor.

It carries out the reaction dUTP + H2O = dUMP + diphosphate + H(+). It functions in the pathway pyrimidine metabolism; dUMP biosynthesis; dUMP from dCTP (dUTP route): step 2/2. Its function is as follows. This enzyme is involved in nucleotide metabolism: it produces dUMP, the immediate precursor of thymidine nucleotides and it decreases the intracellular concentration of dUTP so that uracil cannot be incorporated into DNA. The chain is Deoxyuridine 5'-triphosphate nucleotidohydrolase from Chlorobium luteolum (strain DSM 273 / BCRC 81028 / 2530) (Pelodictyon luteolum).